Reading from the N-terminus, the 473-residue chain is MYLTIIFLFISSIIFPLLFFLGKHLSNFRYPNLPPGKIGFPLIGETLSFLSAGRQGHPEKFVTDRVRHFSSGIFKTHLFGSPFAVVTGASGNKFLFTNENKLVISWWPDSVNKIFPSSTQTSSKEEAIKTRMLLMPSMKPEALRRYVGVMDEIAQKHFETEWANQDQLIVFPLTKKFTFSIACRLFLSMDDLERVRKLEEPFTTVMTGVFSIPIDLPGTRFNRAIKASRLLSKEVSTIIRQRKEELKAGKVSVEQDILSHMLMNIGETKDEDLADKIIALLIGGHDTTSIVCTFVVNYLAEFPHIYQRVLEEQKEILNNKDVNEKLTWEDIEKMRYSWNVACEVMRIVPPLAGTFREAIDHFSFKGFYIPKGWKLYWSATATHKNPEYFPEPEKFEPSRFEGSGPKPYTYVPFGGGSRICPGREYARLEILIFMHNLVKRFKWEKVFPKENKLVADPAPIPAKGLPIRIFPQS.

A helical membrane pass occupies residues 1 to 21; it reads MYLTIIFLFISSIIFPLLFFL. Residue Cys420 coordinates heme.

It belongs to the cytochrome P450 family. Heme is required as a cofactor.

It localises to the membrane. Possesses triterpene oxidizing activity. Catalyzes the C28 hydroxylation of alpha-amyrin, beta-amyrin, and lupeol, producing uvaol, erythrodiol, and betulin, respectively. Catalyzes the C28 carboxylation of alpha- and beta-amyrin. Possesses 22alpha-hydroxylation activity against alpha- and beta-amaryn. In Arabidopsis thaliana (Mouse-ear cress), this protein is Cytochrome P450 716A2.